The following is a 332-amino-acid chain: Holliday junction branch migration complex subunit RuvB (332 aa).

Positions 1–181 (MARILDNDVM…FGITGHMEYY (181 aa)) are large ATPase domain (RuvB-L). Residues leucine 20, arginine 21, glycine 62, lysine 65, threonine 66, threonine 67, 128–130 (EDF), arginine 171, tyrosine 181, and arginine 218 each bind ATP. Threonine 66 contributes to the Mg(2+) binding site. The small ATPAse domain (RuvB-S) stretch occupies residues 182–252 (QEKDLTEIVE…ITDRALTMLD (71 aa)). Positions 255 to 332 (REGLDYIDQK…RHLGYPYQNT (78 aa)) are head domain (RuvB-H). Residues arginine 291, arginine 310, arginine 312, and arginine 315 each contribute to the DNA site.

It belongs to the RuvB family. In terms of assembly, homohexamer. Forms an RuvA(8)-RuvB(12)-Holliday junction (HJ) complex. HJ DNA is sandwiched between 2 RuvA tetramers; dsDNA enters through RuvA and exits via RuvB. An RuvB hexamer assembles on each DNA strand where it exits the tetramer. Each RuvB hexamer is contacted by two RuvA subunits (via domain III) on 2 adjacent RuvB subunits; this complex drives branch migration. In the full resolvosome a probable DNA-RuvA(4)-RuvB(12)-RuvC(2) complex forms which resolves the HJ.

It is found in the cytoplasm. It catalyses the reaction ATP + H2O = ADP + phosphate + H(+). Its function is as follows. The RuvA-RuvB-RuvC complex processes Holliday junction (HJ) DNA during genetic recombination and DNA repair, while the RuvA-RuvB complex plays an important role in the rescue of blocked DNA replication forks via replication fork reversal (RFR). RuvA specifically binds to HJ cruciform DNA, conferring on it an open structure. The RuvB hexamer acts as an ATP-dependent pump, pulling dsDNA into and through the RuvAB complex. RuvB forms 2 homohexamers on either side of HJ DNA bound by 1 or 2 RuvA tetramers; 4 subunits per hexamer contact DNA at a time. Coordinated motions by a converter formed by DNA-disengaged RuvB subunits stimulates ATP hydrolysis and nucleotide exchange. Immobilization of the converter enables RuvB to convert the ATP-contained energy into a lever motion, pulling 2 nucleotides of DNA out of the RuvA tetramer per ATP hydrolyzed, thus driving DNA branch migration. The RuvB motors rotate together with the DNA substrate, which together with the progressing nucleotide cycle form the mechanistic basis for DNA recombination by continuous HJ branch migration. Branch migration allows RuvC to scan DNA until it finds its consensus sequence, where it cleaves and resolves cruciform DNA. The protein is Holliday junction branch migration complex subunit RuvB of Streptococcus pyogenes serotype M12 (strain MGAS9429).